An 873-amino-acid polypeptide reads, in one-letter code: Alanine--tRNA ligase (873 aa).

His-562, His-566, Cys-666, and His-670 together coordinate Zn(2+).

This sequence belongs to the class-II aminoacyl-tRNA synthetase family. It depends on Zn(2+) as a cofactor.

It is found in the cytoplasm. The enzyme catalyses tRNA(Ala) + L-alanine + ATP = L-alanyl-tRNA(Ala) + AMP + diphosphate. Its function is as follows. Catalyzes the attachment of alanine to tRNA(Ala) in a two-step reaction: alanine is first activated by ATP to form Ala-AMP and then transferred to the acceptor end of tRNA(Ala). Also edits incorrectly charged Ser-tRNA(Ala) and Gly-tRNA(Ala) via its editing domain. This Dichelobacter nodosus (strain VCS1703A) protein is Alanine--tRNA ligase.